The chain runs to 319 residues: Lambda-crystallin homolog (319 aa).

A2 is modified (N-acetylalanine). S3 is modified (phosphoserine). Residues 16–17 (LI), D36, E97, and K102 contribute to the NAD(+) site.

This sequence belongs to the 3-hydroxyacyl-CoA dehydrogenase family. In terms of assembly, homodimer. Widely expressed, with highest levels in liver. Undetectable in skeletal muscle.

Its subcellular location is the cytoplasm. It catalyses the reaction L-gulonate + NAD(+) = 3-dehydro-L-gulonate + NADH + H(+). With respect to regulation, inhibited by malonate. Its function is as follows. Has high L-gulonate 3-dehydrogenase activity. It also exhibits low dehydrogenase activity toward L-3-hydroxybutyrate (HBA) and L-threonate. The protein is Lambda-crystallin homolog (Cryl1) of Mus musculus (Mouse).